Consider the following 77-residue polypeptide: Probable Vpr-like protein (77 aa).

The short motif at 34-42 is the Nuclear export signal element; that stretch reads LIRLLQGLL. A Nuclear localization signal motif is present at residues 44-53; the sequence is RLRFRKPKSK.

Its subcellular location is the virion. The protein localises to the host nucleus. Its function is as follows. Seems to function as a Vpr-like protein, since it mediates host cell cycle arrest in G2 phase. Cell cycle arrest creates a favorable environment for maximizing viral expression and production. This Felidae (cat family) protein is Probable Vpr-like protein.